Reading from the N-terminus, the 261-residue chain is 3-methyl-2-oxobutanoate hydroxymethyltransferase (261 aa).

Positions 42 and 81 each coordinate Mg(2+). 3-methyl-2-oxobutanoate contacts are provided by residues 42–43 (DS), Asp81, and Lys110. Residue Glu112 coordinates Mg(2+). Residue Glu179 is the Proton acceptor of the active site.

It belongs to the PanB family. As to quaternary structure, homodecamer; pentamer of dimers. Requires Mg(2+) as cofactor.

Its subcellular location is the cytoplasm. The catalysed reaction is 3-methyl-2-oxobutanoate + (6R)-5,10-methylene-5,6,7,8-tetrahydrofolate + H2O = 2-dehydropantoate + (6S)-5,6,7,8-tetrahydrofolate. It participates in cofactor biosynthesis; (R)-pantothenate biosynthesis; (R)-pantoate from 3-methyl-2-oxobutanoate: step 1/2. Functionally, catalyzes the reversible reaction in which hydroxymethyl group from 5,10-methylenetetrahydrofolate is transferred onto alpha-ketoisovalerate to form ketopantoate. This Thermus thermophilus (strain ATCC BAA-163 / DSM 7039 / HB27) protein is 3-methyl-2-oxobutanoate hydroxymethyltransferase.